An 86-amino-acid chain; its full sequence is Small ribosomal subunit protein bS18 (86 aa).

Belongs to the bacterial ribosomal protein bS18 family. As to quaternary structure, part of the 30S ribosomal subunit. Forms a tight heterodimer with protein bS6.

In terms of biological role, binds as a heterodimer with protein bS6 to the central domain of the 16S rRNA, where it helps stabilize the platform of the 30S subunit. This Campylobacter concisus (strain 13826) protein is Small ribosomal subunit protein bS18.